A 376-amino-acid polypeptide reads, in one-letter code: Chaperone protein DnaJ (376 aa).

The region spanning Asp-5 to Gly-70 is the J domain. The CR-type zinc-finger motif lies at Gly-131–Ser-209. 8 residues coordinate Zn(2+): Cys-144, Cys-147, Cys-161, Cys-164, Cys-183, Cys-186, Cys-197, and Cys-200. 4 CXXCXGXG motif repeats span residues Cys-144–Gly-151, Cys-161–Gly-168, Cys-183–Gly-190, and Cys-197–Gly-204.

This sequence belongs to the DnaJ family. In terms of assembly, homodimer. It depends on Zn(2+) as a cofactor.

It localises to the cytoplasm. In terms of biological role, participates actively in the response to hyperosmotic and heat shock by preventing the aggregation of stress-denatured proteins and by disaggregating proteins, also in an autonomous, DnaK-independent fashion. Unfolded proteins bind initially to DnaJ; upon interaction with the DnaJ-bound protein, DnaK hydrolyzes its bound ATP, resulting in the formation of a stable complex. GrpE releases ADP from DnaK; ATP binding to DnaK triggers the release of the substrate protein, thus completing the reaction cycle. Several rounds of ATP-dependent interactions between DnaJ, DnaK and GrpE are required for fully efficient folding. Also involved, together with DnaK and GrpE, in the DNA replication of plasmids through activation of initiation proteins. The chain is Chaperone protein DnaJ from Escherichia coli O157:H7 (strain EC4115 / EHEC).